A 33-amino-acid chain; its full sequence is Cytochrome b6-f complex subunit 8 (33 aa).

The helical transmembrane segment at 2 to 22 (LFTVAWASLAAMFSFSIAMVV) threads the bilayer.

Belongs to the PetN family. The 4 large subunits of the cytochrome b6-f complex are cytochrome b6, subunit IV (17 kDa polypeptide, PetD), cytochrome f and the Rieske protein, while the 4 small subunits are PetG, PetL, PetM and PetN. The complex functions as a dimer.

It localises to the cellular thylakoid membrane. Functionally, component of the cytochrome b6-f complex, which mediates electron transfer between photosystem II (PSII) and photosystem I (PSI), cyclic electron flow around PSI, and state transitions. The sequence is that of Cytochrome b6-f complex subunit 8 from Synechococcus sp. (strain CC9902).